We begin with the raw amino-acid sequence, 78 residues long: D-alanyl carrier protein (78 aa).

A Carrier domain is found at 1–78 (MDFKQEVLDV…NIVNQLSELK (78 aa)). Residue Ser36 is modified to O-(pantetheine 4'-phosphoryl)serine.

The protein belongs to the DltC family. In terms of processing, 4'-phosphopantetheine is transferred from CoA to a specific serine of apo-DCP.

Its subcellular location is the cytoplasm. Its pathway is cell wall biogenesis; lipoteichoic acid biosynthesis. Carrier protein involved in the D-alanylation of lipoteichoic acid (LTA). The loading of thioester-linked D-alanine onto DltC is catalyzed by D-alanine--D-alanyl carrier protein ligase DltA. The DltC-carried D-alanyl group is further transferred to cell membrane phosphatidylglycerol (PG) by forming an ester bond, probably catalyzed by DltD. D-alanylation of LTA plays an important role in modulating the properties of the cell wall in Gram-positive bacteria, influencing the net charge of the cell wall. The sequence is that of D-alanyl carrier protein from Bacillus subtilis (strain 168).